The sequence spans 147 residues: Large ribosomal subunit protein uL15 (147 aa).

Residues 1 to 42 (MTIKLHHLRPAPGAKTDKTRVGRGEGSKGKTAGRGTKGTKAR) are disordered. Residues 15 to 28 (KTDKTRVGRGEGSK) are compositionally biased toward basic and acidic residues.

This sequence belongs to the universal ribosomal protein uL15 family. As to quaternary structure, part of the 50S ribosomal subunit.

In terms of biological role, binds to the 23S rRNA. This Nocardia farcinica (strain IFM 10152) protein is Large ribosomal subunit protein uL15.